We begin with the raw amino-acid sequence, 471 residues long: MALRLAVSSALRPALNSQVRNASSAVSVKDVLASAPQAEVTTLKNGFRVVTEDNGSATATVGVWIETGSRFENEKNNGVAHFLERLIHKGTGKRASAALESELNAIGAKLNSFTERDQTAVFVQAGAQDVEKVVDILADVLRNSKLEASTIDTERVNLLKELEASDDYHQLVLFDMLHAAGFQGTPLALSVLGTSESIPNISAQQLKEWQEDHYRPVRMVLSAVGGGVSNVSSLADKYFGDLSNEYPRKVPQVDGTRFTGSEYRYRNDNVPHMYAAFAVEGVGYAHKDALALQIANQFIGQWDVTHATSRTAASRLVQKIGHDHGVHNLQHFNINYKDTGLFGIYFVADAHDLNDTSGIMKSVAHEWKHLASAATEEEVAMAKNQFRTNLYQNLETNTQKAGFNAKELLYTGNLRQLSELEAQIQKVDAGAVREAISRHVYDRDLAAVGVGRTEAFPNYALTRAGMSWWRM.

Belongs to the peptidase M16 family.

It localises to the mitochondrion matrix. The protein is Cytochrome b-c1 complex subunit 1, mitochondrial (ucr-1) of Caenorhabditis elegans.